Consider the following 64-residue polypeptide: Small ribosomal subunit protein eS17 (64 aa).

This sequence belongs to the eukaryotic ribosomal protein eS17 family.

The chain is Small ribosomal subunit protein eS17 from Methanosarcina barkeri (strain Fusaro / DSM 804).